A 172-amino-acid chain; its full sequence is Large ribosomal subunit protein uL10 (172 aa).

It belongs to the universal ribosomal protein uL10 family. As to quaternary structure, part of the ribosomal stalk of the 50S ribosomal subunit. The N-terminus interacts with L11 and the large rRNA to form the base of the stalk. The C-terminus forms an elongated spine to which L12 dimers bind in a sequential fashion forming a multimeric L10(L12)X complex.

Forms part of the ribosomal stalk, playing a central role in the interaction of the ribosome with GTP-bound translation factors. This is Large ribosomal subunit protein uL10 from Methylorubrum extorquens (strain CM4 / NCIMB 13688) (Methylobacterium extorquens).